The following is a 185-amino-acid chain: Ribosome-recycling factor (185 aa).

The protein belongs to the RRF family.

It localises to the cytoplasm. Its function is as follows. Responsible for the release of ribosomes from messenger RNA at the termination of protein biosynthesis. May increase the efficiency of translation by recycling ribosomes from one round of translation to another. In Marinomonas sp. (strain MWYL1), this protein is Ribosome-recycling factor.